The following is a 338-amino-acid chain: Mitochondrial E3 ubiquitin protein ligase 1 (338 aa).

The Cytoplasmic segment spans residues 1 to 3 (MEF). The chain crosses the membrane as a helical span at residues 4–24 (LHESVALGVDLLILGLCAREY). Topologically, residues 25-227 (VHYKRTAKVL…LIKRFEDAKT (203 aa)) are mitochondrial intermembrane. The chain crosses the membrane as a helical span at residues 228 to 248 (TTILKLVVCSTISAILVAFIA). Residues 249 to 338 (KKLYRKRKQE…IVSKAAAFIA (90 aa)) lie on the Cytoplasmic side of the membrane. The RING-type zinc-finger motif lies at 290–326 (CVVCSTNPKEIILLPCGHVCLCEDCAQKISVTCPVCR).

In terms of assembly, interacts with Marf. Post-translationally, auto-ubiquitinated.

Its subcellular location is the mitochondrion outer membrane. The enzyme catalyses S-ubiquitinyl-[E2 ubiquitin-conjugating enzyme]-L-cysteine + [acceptor protein]-L-lysine = [E2 ubiquitin-conjugating enzyme]-L-cysteine + N(6)-ubiquitinyl-[acceptor protein]-L-lysine.. Exhibits weak E3 ubiquitin-protein ligase activity. E3 ubiquitin ligases accept ubiquitin from an E2 ubiquitin-conjugating enzyme in the form of a thioester and then directly transfer the ubiquitin to targeted substrates. Plays a role in the control of mitochondrial morphology by promoting mitochondrial fission. Negatively regulates the mitochondrial fusion protein marf by promoting its ubiquitination, acting in a pathway that is parallel to the park/pink1 regulatory pathway. The protein is Mitochondrial E3 ubiquitin protein ligase 1 of Drosophila melanogaster (Fruit fly).